The primary structure comprises 386 residues: Succinate--CoA ligase [ADP-forming] subunit beta (386 aa).

Residues 9-244 (KEILRKYGVS…LDEEDPKEIE (236 aa)) enclose the ATP-grasp domain. ATP is bound by residues K46, 53-55 (GRG), E99, C102, and E107. Mg(2+) is bound by residues N199 and D213. Substrate is bound by residues N264 and 321-323 (GIM).

Belongs to the succinate/malate CoA ligase beta subunit family. Heterotetramer of two alpha and two beta subunits. Mg(2+) serves as cofactor.

It carries out the reaction succinate + ATP + CoA = succinyl-CoA + ADP + phosphate. The enzyme catalyses GTP + succinate + CoA = succinyl-CoA + GDP + phosphate. It functions in the pathway carbohydrate metabolism; tricarboxylic acid cycle; succinate from succinyl-CoA (ligase route): step 1/1. Functionally, succinyl-CoA synthetase functions in the citric acid cycle (TCA), coupling the hydrolysis of succinyl-CoA to the synthesis of either ATP or GTP and thus represents the only step of substrate-level phosphorylation in the TCA. The beta subunit provides nucleotide specificity of the enzyme and binds the substrate succinate, while the binding sites for coenzyme A and phosphate are found in the alpha subunit. In Bacillus pumilus (strain SAFR-032), this protein is Succinate--CoA ligase [ADP-forming] subunit beta.